The sequence spans 480 residues: Protein nucleotidyltransferase YdiU (480 aa).

G86, G88, R89, K109, D121, G122, R172, and R179 together coordinate ATP. The Proton acceptor role is filled by D248. Mg(2+)-binding residues include N249 and D258. Position 258 (D258) interacts with ATP.

The protein belongs to the SELO family. Mg(2+) serves as cofactor. Mn(2+) is required as a cofactor.

The catalysed reaction is L-seryl-[protein] + ATP = 3-O-(5'-adenylyl)-L-seryl-[protein] + diphosphate. It carries out the reaction L-threonyl-[protein] + ATP = 3-O-(5'-adenylyl)-L-threonyl-[protein] + diphosphate. The enzyme catalyses L-tyrosyl-[protein] + ATP = O-(5'-adenylyl)-L-tyrosyl-[protein] + diphosphate. It catalyses the reaction L-histidyl-[protein] + UTP = N(tele)-(5'-uridylyl)-L-histidyl-[protein] + diphosphate. The catalysed reaction is L-seryl-[protein] + UTP = O-(5'-uridylyl)-L-seryl-[protein] + diphosphate. It carries out the reaction L-tyrosyl-[protein] + UTP = O-(5'-uridylyl)-L-tyrosyl-[protein] + diphosphate. In terms of biological role, nucleotidyltransferase involved in the post-translational modification of proteins. It can catalyze the addition of adenosine monophosphate (AMP) or uridine monophosphate (UMP) to a protein, resulting in modifications known as AMPylation and UMPylation. This chain is Protein nucleotidyltransferase YdiU, found in Klebsiella pneumoniae (strain 342).